We begin with the raw amino-acid sequence, 192 residues long: Ion-translocating oxidoreductase complex subunit B (192 aa).

The hydrophobic stretch occupies residues 1–26 (MNAIWIAVAAVSLLGLAFGAILGYAS). Positions 32–91 (EDDPVVEKIDEILPQSQCGQCGYPGCRPYAETISCNGEKINRCAPGGEAVMLKIAELLNV) constitute a 4Fe-4S domain. [4Fe-4S] cluster is bound by residues C49, C52, C57, C74, C117, C120, C123, C127, C147, C150, C153, and C157. 2 consecutive 4Fe-4S ferredoxin-type domains span residues 108–137 (MVAV…GATR) and 138–167 (AMHT…LQPV).

This sequence belongs to the 4Fe4S bacterial-type ferredoxin family. RnfB subfamily. In terms of assembly, the complex is composed of six subunits: RsxA, RsxB, RsxC, RsxD, RsxE and RsxG. The cofactor is [4Fe-4S] cluster.

Its subcellular location is the cell inner membrane. Its function is as follows. Part of a membrane-bound complex that couples electron transfer with translocation of ions across the membrane. Required to maintain the reduced state of SoxR. The chain is Ion-translocating oxidoreductase complex subunit B from Escherichia coli O6:K15:H31 (strain 536 / UPEC).